Consider the following 171-residue polypeptide: Shikimate kinase (171 aa).

14-19 (GAGKST) serves as a coordination point for ATP. Ser18 serves as a coordination point for Mg(2+). The substrate site is built by Asp36, Arg60, and Gly82. Arg120 provides a ligand contact to ATP. Arg139 serves as a coordination point for substrate. ATP is bound at residue Gln156.

Belongs to the shikimate kinase family. In terms of assembly, monomer. Mg(2+) serves as cofactor.

The protein resides in the cytoplasm. It catalyses the reaction shikimate + ATP = 3-phosphoshikimate + ADP + H(+). It functions in the pathway metabolic intermediate biosynthesis; chorismate biosynthesis; chorismate from D-erythrose 4-phosphate and phosphoenolpyruvate: step 5/7. Functionally, catalyzes the specific phosphorylation of the 3-hydroxyl group of shikimic acid using ATP as a cosubstrate. The chain is Shikimate kinase from Shewanella putrefaciens (strain CN-32 / ATCC BAA-453).